Reading from the N-terminus, the 210-residue chain is 3 beta-hydroxysteroid dehydrogenase/Delta 5--&gt;4-isomerase (210 aa).

Tyr-29 functions as the Proton acceptor in the catalytic mechanism. Lys-33 is a binding site for NAD(+).

It belongs to the 3-beta-HSD family.

The catalysed reaction is a 3beta-hydroxy-Delta(5)-steroid + NAD(+) = a 3-oxo-Delta(5)-steroid + NADH + H(+). It carries out the reaction a 3-oxo-Delta(5)-steroid = a 3-oxo-Delta(4)-steroid. The protein operates within lipid metabolism; steroid biosynthesis. Functionally, catalyzes the oxidative conversion of Delta(5)-ene-3-beta-hydroxy steroid, and the oxidative conversion of ketosteroids. The 3-beta-HSD enzymatic system plays a crucial role in the biosynthesis of all classes of hormonal steroids. During viral infection, steroid production contributes to virulence by inhibiting the host inflammatory response. The chain is 3 beta-hydroxysteroid dehydrogenase/Delta 5--&gt;4-isomerase (OPG174) from Variola virus (isolate Human/India/Ind3/1967) (VARV).